The following is a 499-amino-acid chain: MEKKYVLAIDQGTTSSRAMLFDRQGKVAGVAQREFGQIFPQPGWVEHNPREIMTSVYTTITELLNNAQIDAREISGIGITNQRETAVVWDKATGQPIYNAIVWQSRQTKDICTQLKEAGHEQMVRDKTGLLIDAYFSGTKVKWILDHVDGARERARKGELAFGTIDSWLIWNLTGGKVHVTDYTNASRTMMYNIHTLEWDAELLEMLDVPAQMLPEVRSSSEVYGMTQTQYFYGEQVPIAGIAGDQQAALFGQACFEPGIAKNTYGTGCFMLMNTGDKAVASKAGLLTTIAWGIDGKVEYALEGAIFVAGSVVQWLRDGLRMFGKASDSQAYAERAGDNDGVYFVPAFVGLGAPYWRSDIRGAVFGLTRGTSKEHFVRAAVESMAYQTRDVLTAMQSDSGIELKELRADGGAIANDFMAQFQSDILNVPVLRPEVAETTALGAAYLAGLATGFWSSREEIAKQWAVDRRFEPNMPEERREQLYAGWQQAVEATMGFRIS.

T13 provides a ligand contact to ADP. Residues T13, T14, and S15 each coordinate ATP. Residue T13 coordinates sn-glycerol 3-phosphate. Residue R17 participates in ADP binding. The sn-glycerol 3-phosphate site is built by R83, E84, Y135, and D245. R83, E84, Y135, D245, and Q246 together coordinate glycerol. The ADP site is built by T267 and G310. The ATP site is built by T267, G310, Q314, and G411. Positions 411 and 415 each coordinate ADP.

It belongs to the FGGY kinase family.

It carries out the reaction glycerol + ATP = sn-glycerol 3-phosphate + ADP + H(+). It functions in the pathway polyol metabolism; glycerol degradation via glycerol kinase pathway; sn-glycerol 3-phosphate from glycerol: step 1/1. Its activity is regulated as follows. Inhibited by fructose 1,6-bisphosphate (FBP). In terms of biological role, key enzyme in the regulation of glycerol uptake and metabolism. Catalyzes the phosphorylation of glycerol to yield sn-glycerol 3-phosphate. This chain is Glycerol kinase, found in Xanthomonas campestris pv. campestris (strain 8004).